A 683-amino-acid chain; its full sequence is Inositol-trisphosphate 3-kinase C (683 aa).

The tract at residues 1–124 (MRRCPCRGSL…PDRSSLRTHL (124 aa)) is disordered. Low complexity predominate over residues 13–22 (AEAGALPAAA). Gly residues predominate over residues 44 to 58 (PGAGAPAGRPEGGGP). Basic and acidic residues predominate over residues 105–124 (ETERPKQKTEPDRSSLRTHL). Residues serine 127 and serine 162 each carry the phosphoserine modification. The interval 147-308 (TDPHRSDLQF…EDGPLEEPEP (162 aa)) is disordered. Polar residues predominate over residues 196–206 (WTHQNSSSLQT). Residues 249-259 (SQKKQDTEAAR) show a composition bias toward basic and acidic residues. The segment covering 267–289 (FQIQQDTDGSWTQPSTDGSQTAP) has biased composition (polar residues). Residues 297–308 (EPEDGPLEEPEP) show a composition bias toward acidic residues. Positions 324–332 (LCPVPRLII) match the Nuclear export signal motif. Residues 334 to 387 (PETPEPEAQPVGPPSRVEGGSGGFSSASSFDESEDDVVAGGGGASDPEDRSGSK) are disordered. The residue at position 336 (threonine 336) is a Phosphothreonine. At serine 404 the chain carries Phosphoserine. ATP contacts are provided by residues lysine 431, 471-473 (EDL), and aspartate 484. Substrate-binding positions include lysine 486, 507 to 513 (RKDMYEK), and 534 to 541 (KPRYMQWR). The calmodulin-binding stretch occupies residues 509–517 (DMYEKMVAV). Residues lysine 558 and aspartate 638 each contribute to the ATP site. Lysine 641 contacts substrate.

It belongs to the inositol phosphokinase (IPK) family. Highly expressed in pancreas, skeletal muscle, liver, placenta and weakly in kidney and brain.

The protein resides in the nucleus. Its subcellular location is the cytoplasm. The catalysed reaction is 1D-myo-inositol 1,4,5-trisphosphate + ATP = 1D-myo-inositol 1,3,4,5-tetrakisphosphate + ADP + H(+). Its activity is regulated as follows. Activated by calcium/calmodulin. Inhibited by high concentrations of the substrate Ins(1,2,4)P3, and allosterically activated by the product Ins(1,3,4,5)P4. Functionally, catalyzes the phosphorylation of 1D-myo-inositol 1,4,5-trisphosphate (InsP3) into 1D-myo-inositol 1,3,4,5-tetrakisphosphate and participates to the regulation of calcium homeostasis. Can phosphorylate inositol 2,4,5-triphosphate to inositol 2,4,5,6-tetraphosphate. The sequence is that of Inositol-trisphosphate 3-kinase C from Homo sapiens (Human).